We begin with the raw amino-acid sequence, 160 residues long: 3-hydroxyacyl-[acyl-carrier-protein] dehydratase FabZ (160 aa).

Residue His63 is part of the active site.

The protein belongs to the thioester dehydratase family. FabZ subfamily.

The protein localises to the cytoplasm. The enzyme catalyses a (3R)-hydroxyacyl-[ACP] = a (2E)-enoyl-[ACP] + H2O. Its function is as follows. Involved in unsaturated fatty acids biosynthesis. Catalyzes the dehydration of short chain beta-hydroxyacyl-ACPs and long chain saturated and unsaturated beta-hydroxyacyl-ACPs. This chain is 3-hydroxyacyl-[acyl-carrier-protein] dehydratase FabZ, found in Xylella fastidiosa (strain M12).